A 427-amino-acid polypeptide reads, in one-letter code: UDP-N-acetylglucosamine 1-carboxyvinyltransferase 1 (427 aa).

Lys23–Asn24 lines the phosphoenolpyruvate pocket. Arg96 is a UDP-N-acetyl-alpha-D-glucosamine binding site. The active-site Proton donor is the Cys120. Cys120 is modified (2-(S-cysteinyl)pyruvic acid O-phosphothioketal). UDP-N-acetyl-alpha-D-glucosamine contacts are provided by residues Arg125 to Leu129, Asp309, and Val331.

It belongs to the EPSP synthase family. MurA subfamily.

Its subcellular location is the cytoplasm. The catalysed reaction is phosphoenolpyruvate + UDP-N-acetyl-alpha-D-glucosamine = UDP-N-acetyl-3-O-(1-carboxyvinyl)-alpha-D-glucosamine + phosphate. It participates in cell wall biogenesis; peptidoglycan biosynthesis. Its function is as follows. Cell wall formation. Adds enolpyruvyl to UDP-N-acetylglucosamine. The sequence is that of UDP-N-acetylglucosamine 1-carboxyvinyltransferase 1 from Streptococcus pneumoniae (strain ATCC BAA-255 / R6).